The chain runs to 471 residues: Tetratricopeptide repeat protein 29 (471 aa).

7 TPR repeats span residues 92–131, 136–173, 182–215, 234–267, 274–307, 314–347, and 354–387; these read DKLR…EAAE, YEEV…AQLI, AEAE…TQGR, VRTY…AREG, GEAS…STSL, GRAY…ARNN, and IQAC…AMEV.

It is found in the cytoplasm. Its subcellular location is the cytoskeleton. The protein localises to the flagellum axoneme. Its function is as follows. Axonemal protein which is implicated in axonemal and/or peri-axonemal structure assembly and regulates flagellum assembly and beating and therefore sperm motility. The protein is Tetratricopeptide repeat protein 29 (Ttc29) of Rattus norvegicus (Rat).